The sequence spans 256 residues: Hemin import ATP-binding protein HmuV (256 aa).

In terms of domain architecture, ABC transporter spans 2-238 (ISAQNLVYSL…QALTMLYGAD (237 aa)). 34–41 (GPNGAGKS) contacts ATP.

It belongs to the ABC transporter superfamily. Heme (hemin) importer (TC 3.A.1.14.5) family. In terms of assembly, the complex is composed of two ATP-binding proteins (HmuV), two transmembrane proteins (HmuU) and a solute-binding protein (HmuT).

It localises to the cell inner membrane. In terms of biological role, part of the ABC transporter complex HmuTUV involved in hemin import. Responsible for energy coupling to the transport system. The sequence is that of Hemin import ATP-binding protein HmuV from Shigella dysenteriae serotype 1 (strain Sd197).